We begin with the raw amino-acid sequence, 464 residues long: Soluble pyridine nucleotide transhydrogenase (464 aa).

35-44 is a binding site for FAD; it reads DSRRQVGGNC.

This sequence belongs to the class-I pyridine nucleotide-disulfide oxidoreductase family. The cofactor is FAD.

It localises to the cytoplasm. The enzyme catalyses NAD(+) + NADPH = NADH + NADP(+). Functionally, conversion of NADPH, generated by peripheral catabolic pathways, to NADH, which can enter the respiratory chain for energy generation. The chain is Soluble pyridine nucleotide transhydrogenase from Pseudomonas putida (strain W619).